Here is a 271-residue protein sequence, read N- to C-terminus: Tropinone reductase homolog At2g29360 (271 aa).

22–46 serves as a coordination point for NADP(+); the sequence is LVTGGSKGIGEAVVEELATLGARIH. Ser155 contributes to the substrate binding site. Catalysis depends on Tyr168, which acts as the Proton acceptor.

It belongs to the short-chain dehydrogenases/reductases (SDR) family. SDR65C subfamily.

Functionally, oxidoreductase active on cyclic ketones, but not on tropinone or nortropinone. In Arabidopsis thaliana (Mouse-ear cress), this protein is Tropinone reductase homolog At2g29360.